The following is a 345-amino-acid chain: NADH-quinone oxidoreductase subunit H (345 aa).

8 helical membrane passes run 9 to 29, 82 to 102, 108 to 128, 154 to 174, 183 to 203, 241 to 261, 282 to 302, and 325 to 345; these read ALGA…LVFA, VVMV…EGVV, VGVI…TLAG, MGLA…MEIV, LLGW…VTAF, YVNW…GYLV, LLQF…FIWV, and IALA…AVGL.

Belongs to the complex I subunit 1 family. As to quaternary structure, NDH-1 is composed of 14 different subunits. Subunits NuoA, H, J, K, L, M, N constitute the membrane sector of the complex.

It localises to the cell inner membrane. The catalysed reaction is a quinone + NADH + 5 H(+)(in) = a quinol + NAD(+) + 4 H(+)(out). Functionally, NDH-1 shuttles electrons from NADH, via FMN and iron-sulfur (Fe-S) centers, to quinones in the respiratory chain. The immediate electron acceptor for the enzyme in this species is believed to be ubiquinone. Couples the redox reaction to proton translocation (for every two electrons transferred, four hydrogen ions are translocated across the cytoplasmic membrane), and thus conserves the redox energy in a proton gradient. This subunit may bind ubiquinone. The sequence is that of NADH-quinone oxidoreductase subunit H from Salinibacter ruber (strain DSM 13855 / M31).